The following is a 316-amino-acid chain: UDP-N-acetyl-2-amino-2-deoxy-D-glucuronate oxidase (316 aa).

NAD(+) contacts are provided by residues 11-13 (GYI), 32-37 (YDINDS), Glu-55, 81-84 (NYLH), 101-102 (EK), Gln-130, and 171-172 (WK).

The protein belongs to the Gfo/Idh/MocA family. As to quaternary structure, homotetramer.

It carries out the reaction UDP-2-acetamido-2-deoxy-alpha-D-glucuronate + NAD(+) = UDP-2-acetamido-2-deoxy-alpha-D-ribo-hex-3-uluronate + NADH + H(+). The catalysed reaction is 2-hydroxyglutarate + NAD(+) = 2-oxoglutarate + NADH + H(+). Its pathway is bacterial outer membrane biogenesis; LPS O-antigen biosynthesis. Plays a role in the biosynthesis of B-band O antigen for serotype O5. Catalyzes the NAD-dependent oxidation of UDP-N-acetylglucosaminuronic acid (UDP-D-GlcNAcA) to UDP-2-acetamido-2-deoxy-3-oxo-D-glucuronic acid (UDP-3-oxo-D-GlcNAcA). Cannot use UDP-GlcNAc or UDP-GalNAc as the nucleotide sugar substrate, and can use only poorly UDP-D-glucuronic acid (UDP-GlcA). Undergoes an NAD(+) recycling mechanism using 2-oxoglutarate as an oxidant. This is UDP-N-acetyl-2-amino-2-deoxy-D-glucuronate oxidase from Pseudomonas aeruginosa (strain ATCC 15692 / DSM 22644 / CIP 104116 / JCM 14847 / LMG 12228 / 1C / PRS 101 / PAO1).